We begin with the raw amino-acid sequence, 321 residues long: Aldose reductase C (321 aa).

An NADP(+)-binding site is contributed by 22 to 31; that stretch reads GNQIPSIGLG. Y62 functions as the Proton donor in the catalytic mechanism. Substrate is bound at residue H124. NADP(+) is bound at residue 227 to 281; the sequence is SPLGQGKCDFFSNKILKSIAGKYKKSVANVIFKWLNQRGIAAIPKSGNHSRIIEN.

The protein belongs to the aldo/keto reductase family.

The catalysed reaction is an alditol + NAD(+) = an aldose + NADH + H(+). It carries out the reaction an alditol + NADP(+) = an aldose + NADPH + H(+). In terms of biological role, catalyzes the NADPH-dependent reduction of a wide variety of carbonyl-containing compounds to their corresponding alcohols with a broad range of catalytic efficiencies. The protein is Aldose reductase C (alrC) of Dictyostelium discoideum (Social amoeba).